A 174-amino-acid chain; its full sequence is Transcription antitermination protein NusB (174 aa).

Belongs to the NusB family.

Involved in transcription antitermination. Required for transcription of ribosomal RNA (rRNA) genes. Binds specifically to the boxA antiterminator sequence of the ribosomal RNA (rrn) operons. The chain is Transcription antitermination protein NusB from Rhodopseudomonas palustris (strain TIE-1).